Reading from the N-terminus, the 562-residue chain is Dihydroxy-acid dehydratase (562 aa).

Asp-80 lines the Mg(2+) pocket. Cys-121 provides a ligand contact to [2Fe-2S] cluster. Mg(2+) contacts are provided by Asp-122 and Lys-123. Lys-123 carries the post-translational modification N6-carboxylysine. Cys-194 is a binding site for [2Fe-2S] cluster. Glu-446 contributes to the Mg(2+) binding site. Ser-472 acts as the Proton acceptor in catalysis.

The protein belongs to the IlvD/Edd family. Homodimer. Requires [2Fe-2S] cluster as cofactor. Mg(2+) is required as a cofactor.

It catalyses the reaction (2R)-2,3-dihydroxy-3-methylbutanoate = 3-methyl-2-oxobutanoate + H2O. The catalysed reaction is (2R,3R)-2,3-dihydroxy-3-methylpentanoate = (S)-3-methyl-2-oxopentanoate + H2O. It functions in the pathway amino-acid biosynthesis; L-isoleucine biosynthesis; L-isoleucine from 2-oxobutanoate: step 3/4. Its pathway is amino-acid biosynthesis; L-valine biosynthesis; L-valine from pyruvate: step 3/4. Functionally, functions in the biosynthesis of branched-chain amino acids. Catalyzes the dehydration of (2R,3R)-2,3-dihydroxy-3-methylpentanoate (2,3-dihydroxy-3-methylvalerate) into 2-oxo-3-methylpentanoate (2-oxo-3-methylvalerate) and of (2R)-2,3-dihydroxy-3-methylbutanoate (2,3-dihydroxyisovalerate) into 2-oxo-3-methylbutanoate (2-oxoisovalerate), the penultimate precursor to L-isoleucine and L-valine, respectively. In Staphylococcus aureus (strain bovine RF122 / ET3-1), this protein is Dihydroxy-acid dehydratase.